Reading from the N-terminus, the 177-residue chain is Large ribosomal subunit protein uL6 (177 aa).

The protein belongs to the universal ribosomal protein uL6 family. As to quaternary structure, part of the 50S ribosomal subunit.

Functionally, this protein binds to the 23S rRNA, and is important in its secondary structure. It is located near the subunit interface in the base of the L7/L12 stalk, and near the tRNA binding site of the peptidyltransferase center. The protein is Large ribosomal subunit protein uL6 of Rickettsia typhi (strain ATCC VR-144 / Wilmington).